A 379-amino-acid polypeptide reads, in one-letter code: Acyl-CoA dehydrogenase, short-chain specific (379 aa).

Belongs to the acyl-CoA dehydrogenase family. The cofactor is FAD.

The catalysed reaction is butanoyl-CoA + oxidized [electron-transfer flavoprotein] + H(+) = (2E)-butenoyl-CoA + reduced [electron-transfer flavoprotein]. It catalyses the reaction a short-chain 2,3-saturated fatty acyl-CoA + oxidized [electron-transfer flavoprotein] + H(+) = a short-chain (2E)-enoyl-CoA + reduced [electron-transfer flavoprotein]. Its pathway is lipid metabolism; butanoate metabolism. This chain is Acyl-CoA dehydrogenase, short-chain specific (bcd), found in Clostridium acetobutylicum (strain ATCC 824 / DSM 792 / JCM 1419 / IAM 19013 / LMG 5710 / NBRC 13948 / NRRL B-527 / VKM B-1787 / 2291 / W).